The chain runs to 403 residues: Dual-specificity RNA methyltransferase RlmN (403 aa).

The Proton acceptor role is filled by Glu-121. The 249-residue stretch at 127–375 (ETDRGTLCVS…VRTPRGRDIL (249 aa)) folds into the Radical SAM core domain. Cys-134 and Cys-378 form a disulfide bridge. 3 residues coordinate [4Fe-4S] cluster: Cys-141, Cys-145, and Cys-148. S-adenosyl-L-methionine-binding positions include 204 to 205 (GE), Ser-236, 258 to 260 (SLH), and Asn-335. Cys-378 functions as the S-methylcysteine intermediate in the catalytic mechanism.

Belongs to the radical SAM superfamily. RlmN family. [4Fe-4S] cluster serves as cofactor.

The protein resides in the cytoplasm. It carries out the reaction adenosine(2503) in 23S rRNA + 2 reduced [2Fe-2S]-[ferredoxin] + 2 S-adenosyl-L-methionine = 2-methyladenosine(2503) in 23S rRNA + 5'-deoxyadenosine + L-methionine + 2 oxidized [2Fe-2S]-[ferredoxin] + S-adenosyl-L-homocysteine. It catalyses the reaction adenosine(37) in tRNA + 2 reduced [2Fe-2S]-[ferredoxin] + 2 S-adenosyl-L-methionine = 2-methyladenosine(37) in tRNA + 5'-deoxyadenosine + L-methionine + 2 oxidized [2Fe-2S]-[ferredoxin] + S-adenosyl-L-homocysteine. Specifically methylates position 2 of adenine 2503 in 23S rRNA and position 2 of adenine 37 in tRNAs. m2A2503 modification seems to play a crucial role in the proofreading step occurring at the peptidyl transferase center and thus would serve to optimize ribosomal fidelity. The protein is Dual-specificity RNA methyltransferase RlmN of Rhodopseudomonas palustris (strain BisA53).